The primary structure comprises 278 residues: DNA repair protein RecO (278 aa).

The segment covering 1–12 has biased composition (polar residues); it reads MGTNDALTSTED. A disordered region spans residues 1-41; it reads MGTNDALTSTEDAVTAGANDAPLPAPPEPPRKARRATSRTS.

It belongs to the RecO family.

Functionally, involved in DNA repair and RecF pathway recombination. This chain is DNA repair protein RecO, found in Burkholderia orbicola (strain AU 1054).